The primary structure comprises 195 residues: Phosphoheptose isomerase (195 aa).

Residues 35–195 form the SIS domain; it reads IVSKILQAGN…IVEYNLFKME (161 aa). Residue 51–53 participates in substrate binding; it reads NGG. Residues histidine 60 and glutamate 64 each coordinate Zn(2+). Residues glutamate 64, 95–96, 121–123, serine 126, and glutamine 173 each bind substrate; these read ND and STS. The Zn(2+) site is built by glutamine 173 and histidine 181.

It belongs to the SIS family. GmhA subfamily. The cofactor is Zn(2+).

It localises to the cytoplasm. It catalyses the reaction 2 D-sedoheptulose 7-phosphate = D-glycero-alpha-D-manno-heptose 7-phosphate + D-glycero-beta-D-manno-heptose 7-phosphate. Its pathway is carbohydrate biosynthesis; D-glycero-D-manno-heptose 7-phosphate biosynthesis; D-glycero-alpha-D-manno-heptose 7-phosphate and D-glycero-beta-D-manno-heptose 7-phosphate from sedoheptulose 7-phosphate: step 1/1. In terms of biological role, catalyzes the isomerization of sedoheptulose 7-phosphate in D-glycero-D-manno-heptose 7-phosphate. The protein is Phosphoheptose isomerase of Leptospira interrogans serogroup Icterohaemorrhagiae serovar copenhageni (strain Fiocruz L1-130).